The following is a 153-amino-acid chain: uncharacterized protein (153 aa).

A signal peptide spans 1–19; sequence MRKYIPLVLFIFSWPVLCA. Catalysis depends on residues Arg-46, Glu-54, and Arg-88.

This sequence belongs to the thermonuclease family.

This is an uncharacterized protein from Escherichia coli.